The primary structure comprises 69 residues: Large ribosomal subunit protein uL29 (69 aa).

The protein belongs to the universal ribosomal protein uL29 family.

This Granulibacter bethesdensis (strain ATCC BAA-1260 / CGDNIH1) protein is Large ribosomal subunit protein uL29.